Here is a 967-residue protein sequence, read N- to C-terminus: Probable disease resistance protein At1g61190 (967 aa).

Residues 20–68 adopt a coiled-coil conformation; it reads RCLCGKGYIRNLEKNLRALQREMEDLRATQHEVQNKVAREESRHQQRLE. The interval 132–153 is disordered; sequence GNFDEVSQPPPRSEVEERPTQP. Positions 138 to 441 constitute an NB-ARC domain; it reads SQPPPRSEVE…CEGFIGEDQV (304 aa). Residue 180-187 participates in ATP binding; sequence GMGGVGKT. LRR repeat units lie at residues 516-537, 538-559, 562-585, 586-608, and 609-631; these read AVRR…SKCS, ELTT…FIRY, KLVV…SGLV, SLQY…KELK, and KLIF…SRLL.

It belongs to the disease resistance NB-LRR family.

In terms of biological role, probable disease resistance protein. In Arabidopsis thaliana (Mouse-ear cress), this protein is Probable disease resistance protein At1g61190.